Reading from the N-terminus, the 504-residue chain is Glycerol kinase (504 aa).

Residue T14 participates in ADP binding. Residues T14, T15, and S16 each contribute to the ATP site. T14 lines the sn-glycerol 3-phosphate pocket. Residue R18 coordinates ADP. Residues R84, E85, and Y136 each coordinate sn-glycerol 3-phosphate. Glycerol is bound by residues R84, E85, and Y136. H232 bears the Phosphohistidine; by HPr mark. D246 contacts sn-glycerol 3-phosphate. Residues D246 and Q247 each coordinate glycerol. 2 residues coordinate ADP: T268 and G311. T268, G311, Q315, and G412 together coordinate ATP. G412 and N416 together coordinate ADP.

Belongs to the FGGY kinase family. Homotetramer and homodimer (in equilibrium). Post-translationally, the phosphoenolpyruvate-dependent sugar phosphotransferase system (PTS), including enzyme I, and histidine-containing protein (HPr) are required for the phosphorylation, which leads to the activation of the enzyme.

It carries out the reaction glycerol + ATP = sn-glycerol 3-phosphate + ADP + H(+). The protein operates within polyol metabolism; glycerol degradation via glycerol kinase pathway; sn-glycerol 3-phosphate from glycerol: step 1/1. Activated by phosphorylation and inhibited by fructose 1,6-bisphosphate (FBP). Key enzyme in the regulation of glycerol uptake and metabolism. Catalyzes the phosphorylation of glycerol to yield sn-glycerol 3-phosphate. The chain is Glycerol kinase from Streptococcus pyogenes serotype M6 (strain ATCC BAA-946 / MGAS10394).